Here is a 371-residue protein sequence, read N- to C-terminus: MWNPILLDTSSFSFQKHVSGVFLQVRNATKRAAGSRTSMKDSAGRRLGPKKYEGQDVSTGEIIMRQRGTKFYPGENVGIGKDHSIFALEPGVVRYYLDPFHPKRKFIGVALRRDLKLPSPHFEPTVRRFGRFELTNKRAAYKEENSISRKDYLAKPNILKQLEVRESKRKELQDKLSKVLRDELKLDIKDIELATSYLIRVRASLKNGYPIEDARFNSRYYLKEEERLKARRESWTNEKLSESLSKIDECSDLLNSSTSFNNKLELHQYISEQEKQALKAKLLEDLEKSQHLETKKDKNYIKALFKDACNFLTLSEEVHLRRKYLKSVFPETDSTVETKSGKKSIVSRRFDYTKNKVEVIARSRRAFLSKL.

Residues 1 to 27 (MWNPILLDTSSFSFQKHVSGVFLQVRN) constitute a mitochondrion transit peptide.

Belongs to the bacterial ribosomal protein bL27 family. Component of the mitochondrial large ribosomal subunit (mt-LSU). Mature yeast 74S mitochondrial ribosomes consist of a small (37S) and a large (54S) subunit. The 37S small subunit contains a 15S ribosomal RNA (15S mt-rRNA) and 34 different proteins. The 54S large subunit contains a 21S rRNA (21S mt-rRNA) and 46 different proteins.

It is found in the mitochondrion. Its function is as follows. Component of the mitochondrial ribosome (mitoribosome), a dedicated translation machinery responsible for the synthesis of mitochondrial genome-encoded proteins, including at least some of the essential transmembrane subunits of the mitochondrial respiratory chain. The mitoribosomes are attached to the mitochondrial inner membrane and translation products are cotranslationally integrated into the membrane. This is Large ribosomal subunit protein bL27m (MRP7) from Saccharomyces cerevisiae (strain ATCC 204508 / S288c) (Baker's yeast).